The sequence spans 672 residues: Zinc finger protein 271 (672 aa).

The segment at methionine 1–serine 29 is disordered. The span at serine 9–threonine 22 shows a compositional bias: basic and acidic residues. The C2H2-type 1; degenerate zinc-finger motif lies at histidine 80–histidine 102. C2H2-type zinc fingers lie at residues tyrosine 107–histidine 129, tyrosine 135–histidine 157, tyrosine 163–histidine 185, tyrosine 191–histidine 213, tyrosine 219–histidine 241, tyrosine 247–histidine 269, tyrosine 275–histidine 297, tyrosine 303–histidine 325, tyrosine 331–histidine 353, tyrosine 359–histidine 381, tyrosine 387–histidine 409, tyrosine 415–histidine 437, tyrosine 443–histidine 465, tyrosine 471–histidine 493, tyrosine 499–histidine 521, tyrosine 527–histidine 549, asparagine 555–histidine 577, tyrosine 583–histidine 605, and tyrosine 611–histidine 633.

It belongs to the krueppel C2H2-type zinc-finger protein family.

The protein localises to the nucleus. Its function is as follows. May be involved in transcriptional regulation. The chain is Zinc finger protein 271 (ZNF271) from Pongo abelii (Sumatran orangutan).